The primary structure comprises 411 residues: Acetylornithine aminotransferase (411 aa).

Pyridoxal 5'-phosphate-binding positions include 107-108 and F141; that span reads GT. Residue R144 coordinates N(2)-acetyl-L-ornithine. 227 to 230 serves as a coordination point for pyridoxal 5'-phosphate; it reads DEIQ. K256 carries the N6-(pyridoxal phosphate)lysine modification. T284 contributes to the N(2)-acetyl-L-ornithine binding site. T285 serves as a coordination point for pyridoxal 5'-phosphate.

Belongs to the class-III pyridoxal-phosphate-dependent aminotransferase family. ArgD subfamily. As to quaternary structure, homodimer. It depends on pyridoxal 5'-phosphate as a cofactor.

The protein resides in the cytoplasm. It carries out the reaction N(2)-acetyl-L-ornithine + 2-oxoglutarate = N-acetyl-L-glutamate 5-semialdehyde + L-glutamate. The protein operates within amino-acid biosynthesis; L-arginine biosynthesis; N(2)-acetyl-L-ornithine from L-glutamate: step 4/4. This is Acetylornithine aminotransferase from Xylella fastidiosa (strain Temecula1 / ATCC 700964).